The following is a 343-amino-acid chain: Thromboxane A2 receptor (343 aa).

Residues 1–29 (MWPNGSSLGPCFRPTNITLEERRLIASPW) are Extracellular-facing. Residues N4 and N16 are each glycosylated (N-linked (GlcNAc...) asparagine). A helical transmembrane segment spans residues 30 to 52 (FAASFCVVGLASNLLALSVLAGA). Residues 53 to 66 (RQGGSHTRSSFLTF) are Cytoplasmic-facing. The helical transmembrane segment at 67–87 (LCGLVLTDFLGLLVTGAIVVS) threads the bilayer. The Extracellular segment spans residues 88–106 (QHAALFEWHAVDPGCRLCR). C105 and C183 are oxidised to a cystine. The chain crosses the membrane as a helical span at residues 107–128 (FMGVVMIFFGLSPLLLGATMAS). Residues 129 to 149 (ERFLGITRPFSRPVVTSQRRA) lie on the Cytoplasmic side of the membrane. A helical membrane pass occupies residues 150 to 172 (WATVGLVWAAALALGLLPLLGLG). Topologically, residues 173–193 (RYTVQYPGSWCFLTLGAESGD) are extracellular. Residues 194–219 (VAFGLLFSMLGGLSVGLSFLLNTVSV) traverse the membrane as a helical segment. The Cytoplasmic portion of the chain corresponds to 220-246 (ATLCHVYHGQEAAQQRPRDSEVEMMAQ). The chain crosses the membrane as a helical span at residues 247-270 (LLGIMLVASVCWLPLLVFIAQTVL). The Extracellular segment spans residues 271–289 (RNPPAMSPSGQLSRATEQE). The chain crosses the membrane as a helical span at residues 290-311 (LLIYLRVATWNQILDPWVYILF). Over 312-343 (RRAVLRRLQPRLSTRPRSLSLQPQLTQRSGLQ) the chain is Cytoplasmic. Phosphoserine is present on residues S329 and S331.

It belongs to the G-protein coupled receptor 1 family. In terms of assembly, interacts with RPGRIP1L. Interacts with RACK1; the interaction regulates TBXA2R cell surface expression.

Its subcellular location is the cell membrane. In terms of biological role, receptor for thromboxane A2 (TXA2), a potent stimulator of platelet aggregation. The activity of this receptor is mediated by a G-protein that activates a phosphatidylinositol-calcium second messenger system. In the kidney, the binding of TXA2 to glomerular TP receptors causes intense vasoconstriction. Activates phospholipase C and adenylyl cyclase. This is Thromboxane A2 receptor (TBXA2R) from Chlorocebus aethiops (Green monkey).